Reading from the N-terminus, the 67-residue chain is Large ribosomal subunit protein bL35 (67 aa).

Residues 1 to 20 form a disordered region; it reads MPKLKTKSGAKKRFVPKKSG.

The protein belongs to the bacterial ribosomal protein bL35 family.

The protein is Large ribosomal subunit protein bL35 of Anaeromyxobacter dehalogenans (strain 2CP-1 / ATCC BAA-258).